The following is a 385-amino-acid chain: Tryptophan--tRNA ligase (385 aa).

The short motif at 89–98 (PSSKTMHIGH) is the 'HIGH' region element. A 'KMSKS' region motif is present at residues 268–272 (KMSAS).

Belongs to the class-I aminoacyl-tRNA synthetase family. Homodimer.

It catalyses the reaction tRNA(Trp) + L-tryptophan + ATP = L-tryptophyl-tRNA(Trp) + AMP + diphosphate + H(+). The polypeptide is Tryptophan--tRNA ligase (Encephalitozoon cuniculi (strain GB-M1) (Microsporidian parasite)).